The following is a 446-amino-acid chain: Exodeoxyribonuclease 7 large subunit (446 aa).

The protein belongs to the XseA family. Heterooligomer composed of large and small subunits.

It localises to the cytoplasm. The catalysed reaction is Exonucleolytic cleavage in either 5'- to 3'- or 3'- to 5'-direction to yield nucleoside 5'-phosphates.. In terms of biological role, bidirectionally degrades single-stranded DNA into large acid-insoluble oligonucleotides, which are then degraded further into small acid-soluble oligonucleotides. This chain is Exodeoxyribonuclease 7 large subunit, found in Staphylococcus carnosus (strain TM300).